A 335-amino-acid chain; its full sequence is S-adenosylmethionine:tRNA ribosyltransferase-isomerase (335 aa).

The protein belongs to the QueA family. In terms of assembly, monomer.

The protein resides in the cytoplasm. It carries out the reaction 7-aminomethyl-7-carbaguanosine(34) in tRNA + S-adenosyl-L-methionine = epoxyqueuosine(34) in tRNA + adenine + L-methionine + 2 H(+). It participates in tRNA modification; tRNA-queuosine biosynthesis. Its function is as follows. Transfers and isomerizes the ribose moiety from AdoMet to the 7-aminomethyl group of 7-deazaguanine (preQ1-tRNA) to give epoxyqueuosine (oQ-tRNA). This is S-adenosylmethionine:tRNA ribosyltransferase-isomerase from Thermosipho africanus (strain TCF52B).